We begin with the raw amino-acid sequence, 263 residues long: Acyl-[acyl-carrier-protein]--UDP-N-acetylglucosamine O-acyltransferase (263 aa).

The protein belongs to the transferase hexapeptide repeat family. LpxA subfamily. In terms of assembly, homotrimer.

The protein localises to the cytoplasm. The enzyme catalyses a (3R)-hydroxyacyl-[ACP] + UDP-N-acetyl-alpha-D-glucosamine = a UDP-3-O-[(3R)-3-hydroxyacyl]-N-acetyl-alpha-D-glucosamine + holo-[ACP]. Its pathway is glycolipid biosynthesis; lipid IV(A) biosynthesis; lipid IV(A) from (3R)-3-hydroxytetradecanoyl-[acyl-carrier-protein] and UDP-N-acetyl-alpha-D-glucosamine: step 1/6. Functionally, involved in the biosynthesis of lipid A, a phosphorylated glycolipid that anchors the lipopolysaccharide to the outer membrane of the cell. The protein is Acyl-[acyl-carrier-protein]--UDP-N-acetylglucosamine O-acyltransferase of Xylella fastidiosa (strain Temecula1 / ATCC 700964).